Consider the following 146-residue polypeptide: Snaclec coagulation factor IX/factor X-binding protein subunit B2 (146 aa).

Positions 1-23 are cleaved as a signal peptide; sequence MGRLIFVSFGLLVVFLSLSGTAA. Intrachain disulfides connect cysteine 25/cysteine 36, cysteine 53/cysteine 142, and cysteine 119/cysteine 134. A C-type lectin domain is found at 32–143; sequence YEGHCYKPFN…CRMMANFVCE (112 aa).

Belongs to the snaclec family. In terms of assembly, heterodimer of subunits A and B2; disulfide-linked. Expressed by the venom gland.

Its subcellular location is the secreted. Functionally, anticoagulant protein which binds to the gamma-carboxyglutamic acid-domain regions of factors IX (F9) and factor X (F10) in the presence of calcium with a 1 to 1 stoichiometry. This Trimeresurus stejnegeri (Chinese green tree viper) protein is Snaclec coagulation factor IX/factor X-binding protein subunit B2.